We begin with the raw amino-acid sequence, 188 residues long: UPF0398 protein OEOE_1093 (188 aa).

Belongs to the UPF0398 family.

The protein is UPF0398 protein OEOE_1093 of Oenococcus oeni (strain ATCC BAA-331 / PSU-1).